Here is a 236-residue protein sequence, read N- to C-terminus: MTTPHINAVDGAFAETVLMPGDPLRAKYIAENFLKDAVQVTDVRNMLGFTGTYKGKRVSVMGSGMGIPSCSIYATELFREYGVQNIIRVGSCGAVSRDIKLRDVIIGMGASTDSKANRIRFKGHDFAAIASYELLEKAVNAARALGIKARVGNIFSADTFYTPEPEVFDTLEKYNILGVEMEAAGLYGVAAEEGKNALCILTVSDHIRTGEKTTSDERQSSFNEMLIIALDSIVAE.

An a purine D-ribonucleoside-binding site is contributed by His5. Residues Gly21, Arg25, Arg44, and 88–91 contribute to the phosphate site; that span reads RVGS. A purine D-ribonucleoside is bound by residues 180–182 and 204–205; these read EME and SD. The Proton donor role is filled by Asp205.

The protein belongs to the PNP/UDP phosphorylase family. Homohexamer; trimer of homodimers.

The catalysed reaction is a purine D-ribonucleoside + phosphate = a purine nucleobase + alpha-D-ribose 1-phosphate. It carries out the reaction a purine 2'-deoxy-D-ribonucleoside + phosphate = a purine nucleobase + 2-deoxy-alpha-D-ribose 1-phosphate. Functionally, catalyzes the reversible phosphorolytic breakdown of the N-glycosidic bond in the beta-(deoxy)ribonucleoside molecules, with the formation of the corresponding free purine bases and pentose-1-phosphate. The sequence is that of Purine nucleoside phosphorylase DeoD-type from Psychromonas ingrahamii (strain DSM 17664 / CCUG 51855 / 37).